The sequence spans 350 residues: Protein-glutamate methylesterase/protein-glutamine glutaminase (350 aa).

Residues 5 to 122 (KVLCVDDSAL…RDGLIEYSEV (118 aa)) form the Response regulatory domain. A 4-aspartylphosphate modification is found at D56. Positions 152–346 (PFASSEKLVI…ERILTRLGDR (195 aa)) constitute a CheB-type methylesterase domain. Residues S165, H191, and D288 contribute to the active site.

It belongs to the CheB family. In terms of processing, phosphorylated by CheA. Phosphorylation of the N-terminal regulatory domain activates the methylesterase activity.

The protein localises to the cytoplasm. It carries out the reaction [protein]-L-glutamate 5-O-methyl ester + H2O = L-glutamyl-[protein] + methanol + H(+). It catalyses the reaction L-glutaminyl-[protein] + H2O = L-glutamyl-[protein] + NH4(+). In terms of biological role, involved in chemotaxis. Part of a chemotaxis signal transduction system that modulates chemotaxis in response to various stimuli. Catalyzes the demethylation of specific methylglutamate residues introduced into the chemoreceptors (methyl-accepting chemotaxis proteins or MCP) by CheR. Also mediates the irreversible deamidation of specific glutamine residues to glutamic acid. The sequence is that of Protein-glutamate methylesterase/protein-glutamine glutaminase from Bordetella parapertussis (strain 12822 / ATCC BAA-587 / NCTC 13253).